Here is a 440-residue protein sequence, read N- to C-terminus: MTVTIVGAQLGDEGKGGVVDLFGDATDVVVRYQGGDNAGHTVVAGGEEYKLSLVPSGVVRGKTGVLGNGCVINPETLFEEVDALRERGLDPDVRLAKRAHVILPFHRELDGAEEAAKADSDSEIGTTGRGIGPTYEDKIGRRGVRVGDLLNEDALRDRLEYLVDAKRAIYEDVYGFDASETDGAFDIDAIHEQCLAYADRIRDEDLAVNAGDYLADRIADGDNVMLEGAQGTSLDIDHGNFPYVTSSNPTAGYAATGSGLGPTTVGQGEIVGIIKAYLSRVGSGPMPTELDGDQAEYIREEGGEYGTVTGRPRRVGWLDMPMLRHAARANGFTGIAINHLDVLAELDEVNVGHAYERDGERIHTLPATTEAWRDCDPVMKSFDGWSAFDPAVVADAGYSALPDNAQAYVEYVEAELDTPAYVLGVGPGREESVIRQNPFE.

Residues 11–17 and 39–41 each bind GTP; these read GDEGKGG and GHT. Asp-12 serves as the catalytic Proton acceptor. The Mg(2+) site is built by Asp-12 and Gly-39. Residues 12 to 15, 37 to 40, Thr-127, Arg-141, Gln-230, Thr-245, and Arg-311 contribute to the IMP site; these read DEGK and NAGH. Residue His-40 is the Proton donor of the active site. 307–313 serves as a coordination point for substrate; that stretch reads TVTGRPR. Residues Arg-313, 339–341, and 424–426 contribute to the GTP site; these read HLD and GVG.

The protein belongs to the adenylosuccinate synthetase family. In terms of assembly, homodimer. Mg(2+) serves as cofactor.

It localises to the cytoplasm. It carries out the reaction IMP + L-aspartate + GTP = N(6)-(1,2-dicarboxyethyl)-AMP + GDP + phosphate + 2 H(+). Its pathway is purine metabolism; AMP biosynthesis via de novo pathway; AMP from IMP: step 1/2. Plays an important role in the de novo pathway of purine nucleotide biosynthesis. Catalyzes the first committed step in the biosynthesis of AMP from IMP. The polypeptide is Adenylosuccinate synthetase (Halobacterium salinarum (strain ATCC 29341 / DSM 671 / R1)).